The sequence spans 361 residues: Uroporphyrinogen decarboxylase (361 aa).

Substrate-binding positions include 44 to 48 (RQAGR), aspartate 93, tyrosine 168, serine 223, and histidine 337.

The protein belongs to the uroporphyrinogen decarboxylase family. In terms of assembly, homodimer.

The protein resides in the cytoplasm. The enzyme catalyses uroporphyrinogen III + 4 H(+) = coproporphyrinogen III + 4 CO2. The protein operates within porphyrin-containing compound metabolism; protoporphyrin-IX biosynthesis; coproporphyrinogen-III from 5-aminolevulinate: step 4/4. Its function is as follows. Catalyzes the decarboxylation of four acetate groups of uroporphyrinogen-III to yield coproporphyrinogen-III. The protein is Uroporphyrinogen decarboxylase of Thermobifida fusca (strain YX).